Reading from the N-terminus, the 166-residue chain is Putative transmembrane protein encoded by LINC00477 (166 aa).

Residue asparagine 7 is glycosylated (N-linked (GlcNAc...) asparagine). A run of 3 helical transmembrane segments spans residues 15–35 (VSSF…FFLC), 41–61 (MTGC…VLGP), and 63–83 (PMGM…RFLG). Residues 127-166 (LPVPHPPSPLSKCPQHPRPRRTKGPGLRKLWGPGPPFFPS) form a disordered region.

Its subcellular location is the membrane. The protein is Putative transmembrane protein encoded by LINC00477 (LINC00477) of Homo sapiens (Human).